Consider the following 492-residue polypeptide: Glutamyl-tRNA(Gln) amidotransferase subunit A (492 aa).

Residues K79 and S154 each act as charge relay system in the active site. Catalysis depends on S178, which acts as the Acyl-ester intermediate.

Belongs to the amidase family. GatA subfamily. As to quaternary structure, heterotrimer of A, B and C subunits.

It carries out the reaction L-glutamyl-tRNA(Gln) + L-glutamine + ATP + H2O = L-glutaminyl-tRNA(Gln) + L-glutamate + ADP + phosphate + H(+). Allows the formation of correctly charged Gln-tRNA(Gln) through the transamidation of misacylated Glu-tRNA(Gln) in organisms which lack glutaminyl-tRNA synthetase. The reaction takes place in the presence of glutamine and ATP through an activated gamma-phospho-Glu-tRNA(Gln). This Desulforudis audaxviator (strain MP104C) protein is Glutamyl-tRNA(Gln) amidotransferase subunit A.